Consider the following 610-residue polypeptide: ABC transporter ATP-binding protein ARB1 (610 aa).

Positions 1–43 (MPPVSASKAKRDAKKAEREAKKAAAGKTIRKLGRKKEAAAEES) are disordered. Residues Ser43 and Ser65 each carry the phosphoserine modification. 2 ABC transporter domains span residues 82–323 (IKLS…TNQM) and 393–610 (LAFD…NVVL). Position 114-121 (114-121 (GENGCGKS)) interacts with ATP. Ser196 is subject to Phosphoserine. 428–435 (GPNGVGKS) contributes to the ATP binding site. Thr446 is subject to Phosphothreonine.

This sequence belongs to the ABC transporter superfamily. ABCF family. EF3 subfamily. As to quaternary structure, interacts with LSG1.

It is found in the cytoplasm. The protein resides in the nucleus. It catalyses the reaction ATP + H2O = ADP + phosphate + H(+). Functionally, ATPase that stimulates 40S and 60S ribosome biogenesis. Also involved in ribosome-associated quality control (RQC) pathway, a pathway that mediates ubiquitination and extraction of incompletely synthesized nascent chains for proteasomal degradation: localizes to the ribosomal E-site and stimulates VMS1-dependent tRNA cleavage. This chain is ABC transporter ATP-binding protein ARB1 (ARB1), found in Saccharomyces cerevisiae (strain ATCC 204508 / S288c) (Baker's yeast).